Here is a 348-residue protein sequence, read N- to C-terminus: Dihydroorotase (348 aa).

Residues histidine 14 and histidine 16 each coordinate Zn(2+). Substrate contacts are provided by residues histidine 16–arginine 18 and asparagine 42. The Zn(2+) site is built by lysine 100, histidine 137, and histidine 175. Lysine 100 is subject to N6-carboxylysine. Histidine 137 serves as a coordination point for substrate. Substrate is bound at residue leucine 220. Aspartate 248 contributes to the Zn(2+) binding site. Aspartate 248 is an active-site residue. Residues histidine 252 and alanine 264 each coordinate substrate.

It belongs to the metallo-dependent hydrolases superfamily. DHOase family. Class II DHOase subfamily. As to quaternary structure, homodimer. It depends on Zn(2+) as a cofactor.

It carries out the reaction (S)-dihydroorotate + H2O = N-carbamoyl-L-aspartate + H(+). The protein operates within pyrimidine metabolism; UMP biosynthesis via de novo pathway; (S)-dihydroorotate from bicarbonate: step 3/3. Its function is as follows. Catalyzes the reversible cyclization of carbamoyl aspartate to dihydroorotate. The protein is Dihydroorotase of Pseudomonas entomophila (strain L48).